The chain runs to 156 residues: Small ribosomal subunit protein uS7A/uS7B (156 aa).

The protein belongs to the universal ribosomal protein uS7 family. As to quaternary structure, part of the 30S ribosomal subunit. Contacts proteins S9 and S11.

In terms of biological role, one of the primary rRNA binding proteins, it binds directly to 16S rRNA where it nucleates assembly of the head domain of the 30S subunit. Is located at the subunit interface close to the decoding center, probably blocks exit of the E-site tRNA. The sequence is that of Small ribosomal subunit protein uS7A/uS7B from Cereibacter sphaeroides (strain ATCC 17029 / ATH 2.4.9) (Rhodobacter sphaeroides).